Here is a 429-residue protein sequence, read N- to C-terminus: Protein AST1 (429 aa).

In terms of assembly, interacts with PMA1.

The protein localises to the cell membrane. The protein resides in the membrane raft. Its subcellular location is the golgi apparatus membrane. It localises to the late endosome membrane. Its function is as follows. Lipid raft-associated protein involved in the targeting of PMA1 from Golgi to the plasma membrane. May induce clustering of PMA1, which facilitates partition of PMA1 into lipid rafts after leaving the ER and its transport to the cell surface. The chain is Protein AST1 from Saccharomyces cerevisiae (strain ATCC 204508 / S288c) (Baker's yeast).